A 124-amino-acid chain; its full sequence is Small ribosomal subunit protein uS12c (124 aa).

Disordered stretches follow at residues 1–28 (MPTI…KSCP) and 104–124 (AAGV…KPKS). 2 stretches are compositionally biased toward basic residues: residues 11-20 (ERRKINKKTK) and 109-124 (DRRK…KPKS).

The protein belongs to the universal ribosomal protein uS12 family. As to quaternary structure, part of the 30S ribosomal subunit.

Its subcellular location is the plastid. It localises to the chloroplast. Its function is as follows. With S4 and S5 plays an important role in translational accuracy. Located at the interface of the 30S and 50S subunits. This chain is Small ribosomal subunit protein uS12c (rps12), found in Porphyra purpurea (Red seaweed).